We begin with the raw amino-acid sequence, 277 residues long: uncharacterized protein (277 aa).

The SWIM-type zinc-finger motif lies at 139 to 167; the sequence is TARELSLDCSCPDYAVPCKHLAATFYLLA.

This is an uncharacterized protein from Mycobacterium tuberculosis (strain ATCC 25618 / H37Rv).